The chain runs to 229 residues: Cytidylate kinase (229 aa).

Position 12–20 (Gly-12–Thr-20) interacts with ATP.

The protein belongs to the cytidylate kinase family. Type 1 subfamily.

It is found in the cytoplasm. It catalyses the reaction CMP + ATP = CDP + ADP. The enzyme catalyses dCMP + ATP = dCDP + ADP. The sequence is that of Cytidylate kinase from Pseudomonas syringae pv. tomato (strain ATCC BAA-871 / DC3000).